The sequence spans 65 residues: Large ribosomal subunit protein uL29 (65 aa).

This sequence belongs to the universal ribosomal protein uL29 family.

In Lactobacillus acidophilus (strain ATCC 700396 / NCK56 / N2 / NCFM), this protein is Large ribosomal subunit protein uL29.